We begin with the raw amino-acid sequence, 64 residues long: U-poneritoxin(01)-Om1a (64 aa).

The N-terminal stretch at 1–27 is a signal peptide; that stretch reads MKPSGLTFAFLVVFMMAIMYNSVQVTA. Positions 28–45 are excised as a propeptide; it reads DADADAEAEALANALAEA. Methionine 62 carries the post-translational modification Methionine amide.

Post-translationally, truncated sequences of this peptide have also been found in the venom. It is possible they have been cleaved in the venom. Expressed by the venom gland.

It is found in the secreted. Its function is as follows. Antimicrobial peptide with activities against E.coli (MIC=1.3 uM), S.aureus (MIC=3.1 uM), and S.cerevisiae (MIC=50 uM). Also shows histamine-releasing activity (32.9% at 10 uM). Does not show hemolytic activity, even at 50 uM. It is a short peptide for which no alpha-helical region has been predicted. The polypeptide is U-poneritoxin(01)-Om1a (Odontomachus monticola (Trap-jaw ant)).